A 134-amino-acid chain; its full sequence is Protein Turandot E (134 aa).

Residues 1 to 38 (MSNTRTVHSSTSISKMNSALQISCLLVVLGCLLGSGHC) form the signal peptide.

This sequence belongs to the Turandot family.

The protein resides in the secreted. Its function is as follows. A humoral factor that may play a role in stress tolerance. This chain is Protein Turandot E, found in Drosophila melanogaster (Fruit fly).